A 252-amino-acid polypeptide reads, in one-letter code: Imidazole glycerol phosphate synthase subunit HisF (252 aa).

Catalysis depends on residues Asp-11 and Asp-130.

It belongs to the HisA/HisF family. In terms of assembly, heterodimer of HisH and HisF.

The protein resides in the cytoplasm. The enzyme catalyses 5-[(5-phospho-1-deoxy-D-ribulos-1-ylimino)methylamino]-1-(5-phospho-beta-D-ribosyl)imidazole-4-carboxamide + L-glutamine = D-erythro-1-(imidazol-4-yl)glycerol 3-phosphate + 5-amino-1-(5-phospho-beta-D-ribosyl)imidazole-4-carboxamide + L-glutamate + H(+). The protein operates within amino-acid biosynthesis; L-histidine biosynthesis; L-histidine from 5-phospho-alpha-D-ribose 1-diphosphate: step 5/9. Functionally, IGPS catalyzes the conversion of PRFAR and glutamine to IGP, AICAR and glutamate. The HisF subunit catalyzes the cyclization activity that produces IGP and AICAR from PRFAR using the ammonia provided by the HisH subunit. The chain is Imidazole glycerol phosphate synthase subunit HisF from Bacillus velezensis (strain DSM 23117 / BGSC 10A6 / LMG 26770 / FZB42) (Bacillus amyloliquefaciens subsp. plantarum).